A 458-amino-acid chain; its full sequence is Glycine--tRNA ligase (458 aa).

Residues Arg97 and Glu171 each contribute to the substrate site. Residues 203 to 205, 213 to 218, 287 to 288, and 331 to 334 each bind ATP; these read RNE, FRTREF, EL, and GADR. 218–222 lines the substrate pocket; sequence FEQME. Position 327 to 331 (327 to 331) interacts with substrate; the sequence is EPSLG.

It belongs to the class-II aminoacyl-tRNA synthetase family. As to quaternary structure, homodimer.

The protein localises to the cytoplasm. It catalyses the reaction tRNA(Gly) + glycine + ATP = glycyl-tRNA(Gly) + AMP + diphosphate. Its function is as follows. Catalyzes the attachment of glycine to tRNA(Gly). The sequence is that of Glycine--tRNA ligase from Bacillus anthracis.